Here is a 616-residue protein sequence, read N- to C-terminus: Angiotensin-converting enzyme (616 aa).

Residues Met-1–Ser-23 form the signal peptide. Residues Leu-27–Lys-610 enclose the Peptidase M2 domain. Asn-61 and Asn-96 each carry an N-linked (GlcNAc...) asparagine glycan. Residues Cys-142 and Cys-152 are joined by a disulfide bond. Positions 180 and 218 each coordinate chloride. Asn-303 is a glycosylation site (N-linked (GlcNAc...) asparagine). Residues Cys-345 and Cys-363 are joined by a disulfide bond. Zn(2+) is bound at residue His-376. The active-site Proton acceptor is the Glu-377. Zn(2+)-binding residues include His-380 and Glu-404. N-linked (GlcNAc...) asparagine glycosylation is present at Asn-428. 2 residues coordinate chloride: Trp-478 and Arg-482. His-506 acts as the Proton donor in catalysis. Arg-515 contributes to the chloride binding site. A disulfide bridge links Cys-531 with Cys-543. Asn-535 and Asn-573 each carry an N-linked (GlcNAc...) asparagine glycan.

The protein belongs to the peptidase M2 family. The cofactor is Zn(2+). It depends on chloride as a cofactor. Epithelial cells of the midgut.

It is found in the secreted. Its subcellular location is the extracellular space. It carries out the reaction Release of a C-terminal dipeptide, oligopeptide-|-Xaa-Yaa, when Xaa is not Pro, and Yaa is neither Asp nor Glu. Thus, conversion of angiotensin I to angiotensin II, with increase in vasoconstrictor activity, but no action on angiotensin II.. With respect to regulation, activated by chloride. Inhibited by captopril and lisinopril, and to a lesser extent by delaprilat. This chain is Angiotensin-converting enzyme (ACE), found in Theromyzon tessulatum (Duck leech).